Here is a 122-residue protein sequence, read N- to C-terminus: MARIAGVNIPTNKRVLIALQYIHGIGQKHAADIVEKVKIPLDRRVNQLSDQEVLQIREVIDRDYMVEGDLRRETGMNIKRLMDLGCYRGLRHRRGLPVRGQRTHTNARTRKGPAKAIAGKKK.

A disordered region spans residues 99-122; that stretch reads RGQRTHTNARTRKGPAKAIAGKKK.

The protein belongs to the universal ribosomal protein uS13 family. As to quaternary structure, part of the 30S ribosomal subunit. Forms a loose heterodimer with protein S19. Forms two bridges to the 50S subunit in the 70S ribosome.

Functionally, located at the top of the head of the 30S subunit, it contacts several helices of the 16S rRNA. In the 70S ribosome it contacts the 23S rRNA (bridge B1a) and protein L5 of the 50S subunit (bridge B1b), connecting the 2 subunits; these bridges are implicated in subunit movement. Contacts the tRNAs in the A and P-sites. The polypeptide is Small ribosomal subunit protein uS13 (Rhodopseudomonas palustris (strain BisA53)).